The primary structure comprises 395 residues: Chaperone protein DnaJ 2 (395 aa).

One can recognise a J domain in the interval 10 to 75; the sequence is NYYADLGVSS…KKRKEYDELK (66 aa). The CR-type zinc-finger motif lies at 165–242; the sequence is GTTIPVELTG…CHGRGTVRKS (78 aa). Zn(2+)-binding residues include cysteine 178, cysteine 181, cysteine 194, cysteine 197, cysteine 216, cysteine 219, cysteine 230, and cysteine 233. CXXCXGXG motif repeat units follow at residues 178 to 185, 194 to 201, 216 to 223, and 230 to 237; these read CNTCHGSG, CGTCDGTG, CATCGGTG, and CDNCHGRG.

The protein belongs to the DnaJ family. As to quaternary structure, homodimer. Zn(2+) is required as a cofactor.

It localises to the cytoplasm. Functionally, participates actively in the response to hyperosmotic and heat shock by preventing the aggregation of stress-denatured proteins and by disaggregating proteins, also in an autonomous, DnaK-independent fashion. Unfolded proteins bind initially to DnaJ; upon interaction with the DnaJ-bound protein, DnaK hydrolyzes its bound ATP, resulting in the formation of a stable complex. GrpE releases ADP from DnaK; ATP binding to DnaK triggers the release of the substrate protein, thus completing the reaction cycle. Several rounds of ATP-dependent interactions between DnaJ, DnaK and GrpE are required for fully efficient folding. Also involved, together with DnaK and GrpE, in the DNA replication of plasmids through activation of initiation proteins. The chain is Chaperone protein DnaJ 2 from Corynebacterium glutamicum (strain ATCC 13032 / DSM 20300 / JCM 1318 / BCRC 11384 / CCUG 27702 / LMG 3730 / NBRC 12168 / NCIMB 10025 / NRRL B-2784 / 534).